We begin with the raw amino-acid sequence, 189 residues long: Shikimate kinase (189 aa).

Residue 22–27 participates in ATP binding; sequence ASGKST. Ser26 is a Mg(2+) binding site. The substrate site is built by Asp44, Arg68, and Gly90. Arg128 is an ATP binding site. Arg147 is a substrate binding site.

The protein belongs to the shikimate kinase family. In terms of assembly, monomer. It depends on Mg(2+) as a cofactor.

The protein resides in the cytoplasm. It carries out the reaction shikimate + ATP = 3-phosphoshikimate + ADP + H(+). It functions in the pathway metabolic intermediate biosynthesis; chorismate biosynthesis; chorismate from D-erythrose 4-phosphate and phosphoenolpyruvate: step 5/7. Its function is as follows. Catalyzes the specific phosphorylation of the 3-hydroxyl group of shikimic acid using ATP as a cosubstrate. The polypeptide is Shikimate kinase (Synechococcus sp. (strain JA-3-3Ab) (Cyanobacteria bacterium Yellowstone A-Prime)).